A 582-amino-acid polypeptide reads, in one-letter code: Formate--tetrahydrofolate ligase (582 aa).

65–72 (TPLGEGKT) contacts ATP.

It belongs to the formate--tetrahydrofolate ligase family.

The catalysed reaction is (6S)-5,6,7,8-tetrahydrofolate + formate + ATP = (6R)-10-formyltetrahydrofolate + ADP + phosphate. It functions in the pathway one-carbon metabolism; tetrahydrofolate interconversion. The polypeptide is Formate--tetrahydrofolate ligase (Vibrio campbellii (strain ATCC BAA-1116)).